The chain runs to 361 residues: 4-oxalomesaconate tautomerase (361 aa).

Belongs to the PrpF family.

It carries out the reaction (1E)-4-oxobut-1-ene-1,2,4-tricarboxylate = 4-carboxy-2-hydroxy-cis,cis-muconate. Catalyzes the tautomerization of the 4-oxalomesaconic acid keto (OMAketo) generated by GalA dioxygenase to 4-oxalomesaconic acid enol (OMAenol). Mediates the second step in gallate degradation pathway. The polypeptide is 4-oxalomesaconate tautomerase (galD) (Pseudomonas putida (strain ATCC 47054 / DSM 6125 / CFBP 8728 / NCIMB 11950 / KT2440)).